The chain runs to 544 residues: Serine/threonine-protein kinase PAK 1 (544 aa).

The disordered stretch occupies residues 1–79 (MSNNGLDVQD…KERPEISLPS (79 aa)). Ser2 carries the N-acetylserine modification. Ser21 bears the Phosphoserine; by PKB and autocatalysis mark. Residue Ser57 is modified to Phosphoserine; by autocatalysis. The span at 68–79 (KEKERPEISLPS) shows a compositional bias: basic and acidic residues. The autoregulatory region stretch occupies residues 70–140 (KERPEISLPS…YNSKKTSNSQ (71 aa)). A CRIB domain is found at 75–88 (ISLPSDFEHTIHVG). Positions 75–105 (ISLPSDFEHTIHVGFDAVTGEFTGMPEQWAR) are GTPase-binding. The residue at position 84 (Thr84) is a Phosphothreonine; by OXSR1. The residue at position 115 (Ser115) is a Phosphoserine. A phosphotyrosine mark is found at Tyr131 and Tyr142. Phosphoserine; by autocatalysis occurs at positions 144 and 149. Over residues 150–166 (AEDYNSSNTLNVKTVSE) the composition is skewed to polar residues. The segment at 150 to 195 (AEDYNSSNTLNVKTVSETPAVPPVSEDEDDDDDATPPPVIAPRPEH) is disordered. Position 153 is a phosphotyrosine; by JAK2 (Tyr153). The residue at position 174 (Ser174) is a Phosphoserine. Acidic residues predominate over residues 174 to 183 (SEDEDDDDDA). Thr184 carries the phosphothreonine modification. Ser198 carries the phosphoserine; by autocatalysis modification. Tyr200 carries the post-translational modification Phosphotyrosine; by JAK2. Residue Ser203 is modified to Phosphoserine; by autocatalysis. The segment at 209–250 (PVTPTRDVATSPISPTENNTTPPDALTRNTEKQKKKPKMSDE) is disordered. Residues Thr211 and Thr218 each carry the phosphothreonine modification. 2 positions are modified to phosphoserine: Ser219 and Ser222. The segment covering 219–230 (SPISPTENNTTP) has biased composition (polar residues). Phosphothreonine is present on residues Thr224, Thr228, and Thr229. A Protein kinase domain is found at 269–520 (YTRFEKIGQG…AKELLQHQFL (252 aa)). Position 275–283 (275–283 (IGQGASGTV)) interacts with ATP. Tyr284 is modified (phosphotyrosine; by JAK2). ATP is bound at residue Lys298. The Proton acceptor role is filled by Asp388. Thr422 bears the Phosphothreonine; by autocatalysis, BRSK2 and PDPK1 mark.

It belongs to the protein kinase superfamily. STE Ser/Thr protein kinase family. STE20 subfamily. As to quaternary structure, homodimer in its autoinhibited state. Active as monomer. Interacts with GIT1. Component of cytoplasmic complexes, which also contains PXN, ARHGEF7 and GIT1. Interacts with NISCH. Interacts with DVL1; mediates the formation of a DVL1, MUSK and PAK1 ternary complex involved in AChR clustering. Binds to the caspase-cleaved p110 isoform of CDC2L1 and CDC2L2, p110C, but not the full-length proteins. Interacts with ARHGEF7. Interacts with SCRIB. Interacts with PDPK1. Interacts (via kinase domain) with RAF1. Interacts with NCK1 and NCK2. Interacts with TBCB. Interacts with BRSK2. Interacts tightly with GTP-bound but not GDP-bound CDC42/P21 and RAC1. Interacts with SNAI1. Interacts with CIB1 (via N-terminal region); the interaction is direct, promotes PAK1 activity and occurs in a calcium-dependent manner. Interacts with INPP5K. Interacts with gamma-tubulin. Interacts with RHOU; the interaction promotes PAK1 activation. It depends on Mg(2+) as a cofactor. In terms of processing, autophosphorylated in trans, meaning that in a dimer, one kinase molecule phosphorylates the other one. Activated by autophosphorylation at Thr-422 in response to a conformation change, triggered by interaction with GTP-bound CDC42 or RAC1. Activated by phosphorylation at Thr-422 by PDPK1. Phosphorylated by JAK2 in response to PRL; this increases PAK1 kinase activity. Phosphorylated at Ser-21 by PKB/AKT; this reduces interaction with NCK1 and association with focal adhesion sites. Activated by phosphorylation at Thr-422 by BRSK2. Upon DNA damage, phosphorylated at Thr-211 and translocates to the nucleoplasm. Phosphorylated at tyrosine residues, which can be enhanced by NTN1. In terms of tissue distribution, expressed predominantly in the brain, with higher expression in neuronal groups associated with motor function, and at lower levels in the spleen.

It is found in the cytoplasm. Its subcellular location is the cell junction. The protein localises to the focal adhesion. The protein resides in the cell projection. It localises to the lamellipodium. It is found in the cell membrane. Its subcellular location is the ruffle membrane. The protein localises to the invadopodium. The protein resides in the nucleus. It localises to the nucleoplasm. It is found in the chromosome. Its subcellular location is the cytoskeleton. The protein localises to the microtubule organizing center. The protein resides in the centrosome. The catalysed reaction is L-seryl-[protein] + ATP = O-phospho-L-seryl-[protein] + ADP + H(+). It catalyses the reaction L-threonyl-[protein] + ATP = O-phospho-L-threonyl-[protein] + ADP + H(+). Its activity is regulated as follows. Phosphorylation of Thr-84 by OXSR1 inhibits activation. Activated by binding small G proteins. Binding of GTP-bound CDC42 or RAC1 to the autoregulatory region releases monomers from the autoinhibited dimer, and enables activation by phosphorylation of Thr-422. In terms of biological role, protein kinase involved in intracellular signaling pathways downstream of integrins and receptor-type kinases that plays an important role in cytoskeleton dynamics, in cell adhesion, migration, proliferation, apoptosis, mitosis, and in vesicle-mediated transport processes. Can directly phosphorylate BAD and protects cells against apoptosis. Activated by interaction with CDC42 and RAC1. Functions as a GTPase effector that links the Rho-related GTPases CDC42 and RAC1 to the JNK MAP kinase pathway. Phosphorylates and activates MAP2K1, and thereby mediates activation of downstream MAP kinases. Involved in the reorganization of the actin cytoskeleton, actin stress fibers and of focal adhesion complexes. Phosphorylates the tubulin chaperone TBCB and thereby plays a role in the regulation of microtubule biogenesis and organization of the tubulin cytoskeleton. Plays a role in the regulation of insulin secretion in response to elevated glucose levels. Part of a ternary complex that contains PAK1, DVL1 and MUSK that is important for MUSK-dependent regulation of AChR clustering during the formation of the neuromuscular junction (NMJ). Activity is inhibited in cells undergoing apoptosis, potentially due to binding of CDC2L1 and CDC2L2. Phosphorylates MYL9/MLC2. Phosphorylates RAF1 at 'Ser-338' and 'Ser-339' resulting in: activation of RAF1, stimulation of RAF1 translocation to mitochondria, phosphorylation of BAD by RAF1, and RAF1 binding to BCL2. Phosphorylates SNAI1 at 'Ser-246' promoting its transcriptional repressor activity by increasing its accumulation in the nucleus. In podocytes, promotes NR3C2 nuclear localization. Required for atypical chemokine receptor ACKR2-induced phosphorylation of LIMK1 and cofilin (CFL1) and for the up-regulation of ACKR2 from endosomal compartment to cell membrane, increasing its efficiency in chemokine uptake and degradation. In synapses, seems to mediate the regulation of F-actin cluster formation performed by SHANK3, maybe through CFL1 phosphorylation and inactivation. Plays a role in RUFY3-mediated facilitating gastric cancer cells migration and invasion. In response to DNA damage, phosphorylates MORC2 which activates its ATPase activity and facilitates chromatin remodeling. In neurons, plays a crucial role in regulating GABA(A) receptor synaptic stability and hence GABAergic inhibitory synaptic transmission through its role in F-actin stabilization. In hippocampal neurons, necessary for the formation of dendritic spines and excitatory synapses; this function is dependent on kinase activity and may be exerted by the regulation of actomyosin contractility through the phosphorylation of myosin II regulatory light chain (MLC). Along with GIT1, positively regulates microtubule nucleation during interphase. Phosphorylates FXR1, promoting its localization to stress granules and activity. Phosphorylates ILK on 'Thr-173' and 'Ser-246', promoting nuclear export of ILK. The sequence is that of Serine/threonine-protein kinase PAK 1 from Rattus norvegicus (Rat).